A 281-amino-acid polypeptide reads, in one-letter code: Phosphatidylglycerol--prolipoprotein diacylglyceryl transferase (281 aa).

The next 7 helical transmembrane spans lie at I11–F31, L57–Y77, V89–V109, I121–I141, P194–F214, G222–F242, and I255–Y275. A 1,2-diacyl-sn-glycero-3-phospho-(1'-sn-glycerol) is bound at residue R140.

This sequence belongs to the Lgt family.

The protein resides in the cell inner membrane. The catalysed reaction is L-cysteinyl-[prolipoprotein] + a 1,2-diacyl-sn-glycero-3-phospho-(1'-sn-glycerol) = an S-1,2-diacyl-sn-glyceryl-L-cysteinyl-[prolipoprotein] + sn-glycerol 1-phosphate + H(+). Its pathway is protein modification; lipoprotein biosynthesis (diacylglyceryl transfer). In terms of biological role, catalyzes the transfer of the diacylglyceryl group from phosphatidylglycerol to the sulfhydryl group of the N-terminal cysteine of a prolipoprotein, the first step in the formation of mature lipoproteins. In Buchnera aphidicola subsp. Acyrthosiphon pisum (strain Tuc7), this protein is Phosphatidylglycerol--prolipoprotein diacylglyceryl transferase.